Consider the following 309-residue polypeptide: MGINFDVSRPKARSSINMITKFHTIGLIGKPHHQGTNQTLKRLHHWLTMQGFEVLVEERVAAELGPNIEAVDLLEIGARCDLAIVVGGDGNMLGAARVLARFDLGVIGVNRGNLGFLTDLPPDAFEEALAKVLDGEFDTEHRFLLEAEVYRHGMLKASNTAVNEAVLHPGKIAHMIEFEVYIDDQFMYSQRADGMIVSTPTGSTAYALSAGGAILTPNLQALILVPMFPHTLSCRPIVVDACSTIKMVVSPDNGENLEVSCDGHVHLAVLPGDEIIVRRSSERLRLIHPKGHNYFHVLRTKLGWGSKLF.

Catalysis depends on D89, which acts as the Proton acceptor. NAD(+) contacts are provided by residues 89 to 90 (DG), 163 to 164 (NE), H174, R191, D193, and 204 to 209 (TAYALS).

This sequence belongs to the NAD kinase family. The cofactor is a divalent metal cation.

The protein resides in the cytoplasm. The enzyme catalyses NAD(+) + ATP = ADP + NADP(+) + H(+). In terms of biological role, involved in the regulation of the intracellular balance of NAD and NADP, and is a key enzyme in the biosynthesis of NADP. Catalyzes specifically the phosphorylation on 2'-hydroxyl of the adenosine moiety of NAD to yield NADP. This is NAD kinase from Shewanella baltica (strain OS185).